The primary structure comprises 248 residues: Proteasome subunit alpha type-7 (248 aa).

Residue serine 130 is glycosylated (O-linked (GlcNAc) serine). Tyrosine 153 is modified (phosphotyrosine).

This sequence belongs to the peptidase T1A family. As to quaternary structure, the 26S proteasome consists of a 20S proteasome core and two 19S regulatory subunits. The 20S proteasome core is a barrel-shaped complex made of 28 subunits that are arranged in four stacked rings. The two outer rings are each formed by seven alpha subunits, and the two inner rings are formed by seven beta subunits. The proteolytic activity is exerted by three beta-subunits PSMB5, PSMB6 and PSMB7. PSMA7 interacts directly with the PSMG1-PSMG2 heterodimer which promotes 20S proteasome assembly. Interacts with HIF1A. Interacts with RAB7A. Interacts with PRKN. Interacts with ABL1 and ABL2. Interacts with EMAP2. Interacts with MAVS.

The protein resides in the cytoplasm. It localises to the nucleus. Its function is as follows. Component of the 20S core proteasome complex involved in the proteolytic degradation of most intracellular proteins. This complex plays numerous essential roles within the cell by associating with different regulatory particles. Associated with two 19S regulatory particles, forms the 26S proteasome and thus participates in the ATP-dependent degradation of ubiquitinated proteins. The 26S proteasome plays a key role in the maintenance of protein homeostasis by removing misfolded or damaged proteins that could impair cellular functions, and by removing proteins whose functions are no longer required. Associated with the PA200 or PA28, the 20S proteasome mediates ubiquitin-independent protein degradation. This type of proteolysis is required in several pathways including spermatogenesis (20S-PA200 complex) or generation of a subset of MHC class I-presented antigenic peptides (20S-PA28 complex). Inhibits the transactivation function of HIF-1A under both normoxic and hypoxia-mimicking conditions. The interaction with EMAP2 increases the proteasome-mediated HIF-1A degradation under the hypoxic conditions. Plays a role in hepatitis C virus internal ribosome entry site-mediated translation. Mediates nuclear translocation of the androgen receptor (AR) and thereby enhances androgen-mediated transactivation. Promotes MAVS degradation and thereby negatively regulates MAVS-mediated innate immune response. This is Proteasome subunit alpha type-7 (PSMA7) from Pongo abelii (Sumatran orangutan).